The following is a 387-amino-acid chain: Trichocyst matrix protein T2-C (387 aa).

The N-terminal stretch at 1–19 (MKTIILALALIVLASSTQA) is a signal peptide. A propeptide spanning residues 20 to 48 (DVIATIKKIDQSPFGRTLFDTIWLELQTG) is cleaved from the precursor. Residues 51–163 (LDRLLQTLTD…KVLEHQEATA (113 aa)) adopt a coiled-coil conformation. Residues 184–239 (KGKATKQPAHKFTKEVASMIQKHFTTSAKKAAKFQHRKGYSKLFKAFATIASKVEQ) constitute a propeptide that is removed on maturation. Residues 294-333 (TALANAQSDLAALNDVIAQVEASLDTTNQRIENVSADRND) are a coiled coil.

This sequence belongs to the TMP family. In terms of processing, two components are produced by post-translational processing from the precursor peptide.

The protein localises to the trichocyst. Structural protein that crystallize inside the trichocyst matrix. This chain is Trichocyst matrix protein T2-C (T2C), found in Paramecium tetraurelia.